A 587-amino-acid polypeptide reads, in one-letter code: MFRTHTCGELRISDVNKQITLSGWVQRSRKMGGMTFIDLRDRYGITQLVFNEEINAELCDRANKLGREFVIQITGTVNERFSKNANIPTGDIEIIVSELNVLNTAMTPPFTIEDNTDGGDDIRMKYRYLDLRRNAVRSNLELRHKMTIEVRKYLDSLGFIEVETPVLIGSTPEGARDFVVPSRMNPGQFYALPQSPQTLKQLLMVSGFDRYFQIAKCFRDEDLRADRQPEFTQIDCEMSFVEQEDIISTFEGMAKHLFKTLRGVELTEPFQRMPWADAMKYYGSDKPDLRFGMKFVELMDIMKGHGFSVFDNAAYVGGICAEGAATYTRKQLDALTEFVKKPQIGAKGMVYARVEADGTVKSSVDKFYTQEVLQQMKEAFGAKPGDLILILSGDDVMKTRKQLCELRLEMGSQLGLRDKNKFVCLWVIDFPMFEWSEEEGRLMAMHHPFTHPKEEDIPLLDTDPAAVRADAYDMVVNGVEVGGGSIRIHDAQLQARMFEILGFTPEKAQAQFGFLMNAFKYGAPPHGGLAYGLDRWVSLFAGLDSIRDCIAFPKNNSGRDVMLDAPSEIDQTQLDELNLIVDIKENK.

An L-aspartate-binding site is contributed by Glu-173. Positions 197–200 (QTLK) are aspartate. Arg-219 lines the L-aspartate pocket. Residues 219–221 (RDE) and Gln-228 contribute to the ATP site. His-446 contacts L-aspartate. Glu-480 provides a ligand contact to ATP. Residue Arg-487 participates in L-aspartate binding. Position 532–535 (532–535 (GLDR)) interacts with ATP.

It belongs to the class-II aminoacyl-tRNA synthetase family. Type 1 subfamily. In terms of assembly, homodimer.

It is found in the cytoplasm. It carries out the reaction tRNA(Asp) + L-aspartate + ATP = L-aspartyl-tRNA(Asp) + AMP + diphosphate. In terms of biological role, catalyzes the attachment of L-aspartate to tRNA(Asp) in a two-step reaction: L-aspartate is first activated by ATP to form Asp-AMP and then transferred to the acceptor end of tRNA(Asp). The protein is Aspartate--tRNA ligase of Bacteroides thetaiotaomicron (strain ATCC 29148 / DSM 2079 / JCM 5827 / CCUG 10774 / NCTC 10582 / VPI-5482 / E50).